We begin with the raw amino-acid sequence, 473 residues long: ATP synthase subunit beta 2 (473 aa).

ATP is bound at residue 158–165; that stretch reads GGAGVGKT.

This sequence belongs to the ATPase alpha/beta chains family. F-type ATPases have 2 components, CF(1) - the catalytic core - and CF(0) - the membrane proton channel. CF(1) has five subunits: alpha(3), beta(3), gamma(1), delta(1), epsilon(1). CF(0) has three main subunits: a(1), b(2) and c(9-12). The alpha and beta chains form an alternating ring which encloses part of the gamma chain. CF(1) is attached to CF(0) by a central stalk formed by the gamma and epsilon chains, while a peripheral stalk is formed by the delta and b chains.

The protein resides in the cell membrane. It catalyses the reaction ATP + H2O + 4 H(+)(in) = ADP + phosphate + 5 H(+)(out). In terms of biological role, produces ATP from ADP in the presence of a proton gradient across the membrane. The catalytic sites are hosted primarily by the beta subunits. The chain is ATP synthase subunit beta 2 from Listeria welshimeri serovar 6b (strain ATCC 35897 / DSM 20650 / CCUG 15529 / CIP 8149 / NCTC 11857 / SLCC 5334 / V8).